A 176-amino-acid polypeptide reads, in one-letter code: I-Kappa-B like protein G1 (176 aa).

ANK repeat units lie at residues 56–88, 93–123, and 127–156; these read EGRQ…DINS, FGNT…ELGA, and LYKT…VCDD.

Belongs to the polydnaviridae I-Kappa-B-like protein family.

In terms of biological role, suppresses the host immune response through NF-kappa-B inactivation. Possesses ankyrin repeat domains required for NF-kappa-B binding but lacks the regulatory regions required for dissociation from NF-kappa-B and degradation. Therefore, prevents host NF-kappa-B release and subsequent activation. This is I-Kappa-B like protein G1 (G3) from Microplitis demolitor (Parasitoid wasp).